Consider the following 437-residue polypeptide: Glutamyl-tRNA reductase (437 aa).

Substrate is bound by residues 46 to 49 (TCNR), Ser-97, 102 to 104 (EEQ), and Gln-108. The Nucleophile role is filled by Cys-47. 177-182 (GAGEMG) serves as a coordination point for NADP(+). The segment at 410 to 437 (NGRVSEGKDAKVEEGKPEVDVQRSKAES) is disordered. The span at 414-437 (SEGKDAKVEEGKPEVDVQRSKAES) shows a compositional bias: basic and acidic residues.

This sequence belongs to the glutamyl-tRNA reductase family. In terms of assembly, homodimer.

The catalysed reaction is (S)-4-amino-5-oxopentanoate + tRNA(Glu) + NADP(+) = L-glutamyl-tRNA(Glu) + NADPH + H(+). It participates in porphyrin-containing compound metabolism; protoporphyrin-IX biosynthesis; 5-aminolevulinate from L-glutamyl-tRNA(Glu): step 1/2. Functionally, catalyzes the NADPH-dependent reduction of glutamyl-tRNA(Glu) to glutamate 1-semialdehyde (GSA). This is Glutamyl-tRNA reductase from Archaeoglobus fulgidus (strain ATCC 49558 / DSM 4304 / JCM 9628 / NBRC 100126 / VC-16).